We begin with the raw amino-acid sequence, 83 residues long: UPF0248 protein TGAM_1209 (83 aa).

Belongs to the UPF0248 family.

The protein is UPF0248 protein TGAM_1209 of Thermococcus gammatolerans (strain DSM 15229 / JCM 11827 / EJ3).